We begin with the raw amino-acid sequence, 2769 residues long: MDVKERKPYRSLTRRRDAERRYTSSSADSEEGKAPQKSYSSSETLKAYDQDARLAYGSRVKDIVPQEAEEFCRTGANFTLRELGLEEVTPPHGTLYRTDIGLPHCGYSMGAGSDADMEADTVLSPEHPVRLWGRSTRSGRSSCLSSRANSNLTLTDTEHENTETDHPGGLQNHARLRTPPPPLSHAHTPNQHHAASINSLNRGNFTPRSNPSPAPTDHSLSGEPPAGGAQEPAHAQENWLLNSNIPLETRNLGKQPFLGTLQDNLIEMDILGASRHDGAYSDGHFLFKPGGTSPLFCTTSPGYPLTSSTVYSPPPRPLPRSTFARPAFNLKKPSKYCNWKCAALSAIVISATLVILLAYFVAMHLFGLNWHLQPMEGQMYEITEDTASSWPVPTDVSLYPSGGTGLETPDRKGKGTTEGKPSSFFPEDSFIDSGEIDVGRRASQKIPPGTFWRSQVFIDHPVHLKFNVSLGKAALVGIYGRKGLPPSHTQFDFVELLDGRRLLTQEARSLEGTPRQSRGTVPPSSHETGFIQYLDSGIWHLAFYNDGKESEVVSFLTTAIESVDNCPSNCYGNGDCISGTCHCFLGFLGPDCGRASCPVLCSGNGQYMKGRCLCHSGWKGAECDVPTNQCIDVACSNHGTCITGTCICNPGYKGESCEEVDCMDPTCSGRGVCVRGECHCSVGWGGTNCETPRATCLDQCSGHGTFLPDTGLCSCDPSWTGHDCSIEICAADCGGHGVCVGGTCRCEDGWMGAACDQRACHPRCAEHGTCRDGKCECSPGWNGEHCTIAHYLDRVVKEGCPGLCNGNGRCTLDLNGWHCVCQLGWRGAGCDTSMETACGDSKDNDGDGLVDCMDPDCCLQPLCHINPLCLGSPNPLDIIQETQVPVSQQNLHSFYDRIKFLVGRDSTHIIPGENPFDGGHACVIRGQVMTSDGTPLVGVNISFVNNPLFGYTISRQDGSFDLVTNGGISIILRFERAPFITQEHTLWLPWDRFFVMETIIMRHEENEIPSCDLSNFARPNPVVSPSPLTSFASSCAEKGPIVPEIQALQEEISISGCKMRLSYLSSRTPGYKSVLRISLTHPTIPFNLMKVHLMVAVEGRLFRKWFAAAPDLSYYFIWDKTDVYNQKVFGLSEAFVSVGYEYESCPDLILWEKRTTVLQGYEIDASKLGGWSLDKHHALNIQSGILHKGNGENQFVSQQPPVIGSIMGNGRRRSISCPSCNGLADGNKLLAPVALTCGSDGSLYVGDFNYIRRIFPSGNVTNILELRNKDFRHSHSPAHKYYLATDPMSGAVFLSDSNSRRVFKIKSTVVVKDLVKNSEVVAGTGDQCLPFDDTRCGDGGKATEATLTNPRGITVDKFGLIYFVDGTMIRRIDQNGIISTLLGSNDLTSARPLSCDSVMDISQVHLEWPTDLAINPMDNSLYVLDNNVVLQISENHQVRIVAGRPMHCQVPGIDHFLLSKVAIHATLESATALAVSHNGVLYIAETDEKKINRIRQVTTSGEISLVAGAPSGCDCKNDANCDCFSGDDGYAKDAKLNTPSSLAVCADGELYVADLGNIRIRFIRKNKPFLNTQNMYELSSPIDQELYLFDTTGKHLYTQSLPTGDYLYNFTYTGDGDITLITDNNGNMVNVRRDSTGMPLWLVVPDGQVYWVTMGTNSALKSVTTQGHELAMMTYHGNSGLLATKSNENGWTTFYEYDSFGRLTNVTFPTGQVSSFRSDTDSSVHVQVETSSKDDVTITTNLSASGAFYTLLQDQVRNSYYIGADGSLRLLLANGMEVALQTEPHLLAGTVNPTVGKRNVTLPIDNGLNLVEWRQRKEQARGQVTVFGRRLRVHNRNLLSLDFDRVTRTEKIYDDHRKFTLRILYDQAGRPSLWSPSSRLNGVNVTYSPGGYIAGIQRGIMSERMEYDQAGRITSRIFADGKTWSYTYLEKSMVLLLHSQRQYIFEFDKNDRLSSVTMPNVARQTLETIRSVGYYRNIYQPPEGNASVIQDFTEDGHLLHTFYLGTGRRVIYKYGKLSKLAETLYDTTKVSFTYDETAGMLKTINLQNEGFTCTIRYRQIGPLIDRQIFRFTEEGMVNARFDYNYDNSFRVTSMQAVINETPLPIDLYRYDDVSGKTEQFGKFGVIYYDINQIITTAVMTHTKHFDAYGRMKEVQYEIFRSLMYWMTVQYDNMGRVVKKELKVGPYANTTRYSYEYDADGQLQTVSINDKPLWRYSYDLNGNLHLLSPGNSARLTPLRYDIRDRITRLGDVQYKMDEDGFLRQRGGDIFEYNSAGLLIKAYNRAGSWSVRYRYDGLGRRVSSKSSHSHHLQFFYADLTNPTKVTHLYNHSSSEITSLYYDLQGHLFAMELSSGDEFYIACDNIGTPLAVFSGTGLMIKQILYTAYGEIYMDTNPNFQIIIGYHGGLYDPLTKLVHMGRRDYDVLAGRWTSPDHELWKHLSSSNVMPFNLYMFKNNNPISNSQDIKCFMTDVNSWLLTFGFQLHNVIPGYPKPDMDAMEPSYELIHTQMKTQEWDNSKSILGVQCEVQKQLKAFVTLERFDQLYGSTITSCQQAPKTKKFASSGSVFGKGVKFALKDGRVTTDIISVANEDGRRVAAILNHAHYLENLHFTIDGVDTHYFVKPGPSEGDLAILGLSGGRRTLENGVNVTVSQINTVLNGRTRRYTDIQLQYGALCLNTRYGTTLDEEKARVLELARQRAVRQAWAREQQRLREGEEGLRAWTEGEKQQVLSTGRVQGYDGFFVISVEQYPELSDSANNIHFMRQSEMGRR.

Basic and acidic residues predominate over residues M1 to Y22. Residues M1–L45 form a disordered region. The region spanning M1 to C341 is the Teneurin N-terminal domain. Residues M1–S345 lie on the Cytoplasmic side of the membrane. S124 is modified (phosphoserine). The tract at residues R130–A233 is disordered. The segment covering R134–T155 has biased composition (low complexity). Residues D156–H166 show a composition bias toward basic and acidic residues. At T178 the chain carries Phosphothreonine. Residues H187–P211 are compositionally biased toward polar residues. Residues A346–F366 traverse the membrane as a helical segment. Over G367–R2769 the chain is Extracellular. Positions P400–P426 are disordered. Over residues T408–T417 the composition is skewed to basic and acidic residues. A glycan (N-linked (GlcNAc...) asparagine) is linked at N467. The interval A507 to H526 is disordered. A compositionally biased stretch (polar residues) spans P514 to H526. EGF-like domains are found at residues S562–G593, R594–D624, P626–E658, E659–E690, P692–S725, I726–Q757, R758–T787, and I788–D831. Intrachain disulfides connect C566–C576, C570–C581, C583–C592, C601–C612, C614–C623, C630–C641, C635–C646, C648–C657, C662–C673, C667–C678, C680–C689, C700–C713, C715–C724, C729–C739, C733–C744, C746–C755, C760–C770, C764–C775, C777–C786, C800–C810, C804–C819, and C821–C830. N-linked (GlcNAc...) asparagine glycosylation is found at N940 and N1259. 5 NHL repeats span residues S1216–N1259, L1264–T1308, T1334–I1378, L1393–R1444, and C1523–N1566. The YD 1 repeat unit spans residues Y1576–H1595. N1609 is a glycosylation site (N-linked (GlcNAc...) asparagine). YD repeat units follow at residues Y1612–R1632, Y1675–F1694, and Y1695–R1717. Residues N1705, N1741, N1799, and N1884 are each glycosylated (N-linked (GlcNAc...) asparagine). 18 YD repeats span residues Y1887–E1906, Y1928–E1946, F1947–E1967, Y1974–D1991, F1992–K2013, Y2014–S2031, Y2034–T2054, Y2057–V2077, Y2085–P2104, Y2110–Y2127, Y2128–V2154, Y2156–Q2169, Y2170–S2193, Y2196–S2216, Y2217–L2237, Y2239–G2259, Y2271–Y2291, and Y2293–F2313. N1985 carries N-linked (GlcNAc...) asparagine glycosylation. N2188 carries N-linked (GlcNAc...) asparagine glycosylation. N2328 carries N-linked (GlcNAc...) asparagine glycosylation. The stretch at Y2339–I2380 is one YD 23 repeat. N2646 carries N-linked (GlcNAc...) asparagine glycosylation.

This sequence belongs to the tenascin family. Teneurin subfamily. In terms of assembly, homodimer; disulfide-linked. May also form heterodimer with either TENM1 or TENM2 or TENM3.

It is found in the cell membrane. Its subcellular location is the cell projection. The protein resides in the nucleus. The protein localises to the cytoplasm. Functionally, involved in neural development, regulating the establishment of proper connectivity within the nervous system. Plays a role in the establishment of the anterior-posterior axis during gastrulation. Regulates the differentiation and cellular process formation of oligodendrocytes and myelination of small-diameter axons in the central nervous system (CNS). Promotes activation of focal adhesion kinase. May function as a cellular signal transducer. This Homo sapiens (Human) protein is Teneurin-4 (TENM4).